Reading from the N-terminus, the 531-residue chain is Protein SHORT-ROOT (531 aa).

The segment covering 14-39 (QQSDSIITNQSSLSRTSTTTTGSPQT) has biased composition (low complexity). Disordered stretches follow at residues 14 to 40 (QQSDSIITNQSSLSRTSTTTTGSPQTA) and 65 to 103 (SSSSSHHNHHNHNNPNTYYSPFTTPTQYHPATSSTPSST). Positions 81–93 (TYYSPFTTPTQYH) are enriched in polar residues. Residues 94–103 (PATSSTPSST) show a composition bias toward low complexity. One can recognise a GRAS domain in the interval 134 to 529 (FDFSANAKWA…QPVVWASAWR (396 aa)). The leucine repeat I (LRI) stretch occupies residues 141–206 (KWADSVLLEA…GSGERCYRTM (66 aa)). A VHIID region spans residues 225–290 (VLKFQEVSPW…DDTPHLRLTT (66 aa)). Residues 256 to 260 (IHIVD) carry the VHIID motif. A leucine repeat II (LRII) region spans residues 310–343 (EIGNRMEKFARLMGVPFKFNIIHHVGDLSEFDLN). The segment at 353–449 (LAINCVGAMH…ERAAGRAIVD (97 aa)) is PFYRE. Residues 452–529 (ACEPSDSTER…QPVVWASAWR (78 aa)) are SAW.

The protein belongs to the GRAS family. As to quaternary structure, interacts with SCR, SCL23, JKD and MGP. Interacts with SIEL. Association to endosomes and intercellular movement of SHR rely on the interaction with SIEL. Expressed in the stele and the quiescent center. Not detected in the ground tissue cell lineage. The SHR protein moves from the stele to a single layer of adjacent cells, where it enters the nucleus.

Its subcellular location is the cytoplasm. It is found in the nucleus. The protein resides in the early endosome. The protein localises to the late endosome. It localises to the recycling endosome. Functionally, transcription factor required for quiescent center cells specification and maintenance of surrounding stem cells, and for the asymmetric cell division involved in radial pattern formation in roots. Essential for both cell division and cell specification. Regulates the radial organization of the shoot axial organs and is required for normal shoot gravitropism. Directly controls the transcription of SCR, and when associated with SCR, of MGP, RLK, TRI, NUC and SCL3. The chain is Protein SHORT-ROOT from Arabidopsis thaliana (Mouse-ear cress).